We begin with the raw amino-acid sequence, 619 residues long: Calnexin (619 aa).

The signal sequence occupies residues 1–21; that stretch reads MVNRKWMYIFIQFLLVSSIRS. Aspartate 109 contributes to the Ca(2+) binding site. Cysteines 152 and 186 form a disulfide. The an alpha-D-glucoside site is built by tyrosine 156, lysine 158, tyrosine 177, and aspartate 184. Residue asparagine 203 is glycosylated (N-linked (GlcNAc...) asparagine). Residues 268–401 are p domain (Extended arm); it reads IFDETDLKPV…RLIDNPNYFE (134 aa). 5 tandem repeats follow at residues 270–282, 287–299, 306–318, 325–337, and 340–350. 4 X approximate repeats regions lie at residues 270–337 and 340–397; these read DETD…WDED and GSWE…IDNP. A disulfide bridge links cysteine 352 with cysteine 358. 3 consecutive repeat copies span residues 359 to 369, 373 to 383, and 387 to 397. Glutamate 417 contributes to the an alpha-D-glucoside binding site. Ca(2+) is bound at residue aspartate 428. The helical transmembrane segment at 481–501 threads the bilayer; sequence LWAVYILCVLLPLVAIGVFCF. The tract at residues 538–619 is disordered; the sequence is GDEEDDVNQP…AKRRTARRGD (82 aa). The span at 547–557 shows a compositional bias: polar residues; that stretch reads PGPSGSQSNPE. Over residues 566 to 577 the composition is skewed to low complexity; the sequence is EQQSANSSQSSA. An N-linked (GlcNAc...) asparagine glycan is attached at asparagine 571. The span at 585 to 601 shows a compositional bias: basic and acidic residues; it reads HVVPENEPVKPTEEFAK. Basic residues predominate over residues 610 to 619; sequence AKRRTARRGD.

This sequence belongs to the calreticulin family. In terms of processing, glycosylation is important for its biological activity. As to expression, expressed ubiquitously in every blastomere of the embryo up to the gastrulation stage. Expression becomes gradually restricted to the head and tail regions at the comma stage during embryogenesis. During postembryonic development, expressed prominently in the H-shaped excretory cell, in the neurons of head (including ASK and ADL) and tail (including PHA and PHB), in the dorsal and ventral nerve cords, and in the spermatheca. Expressed in the spicules of the male tail (at protein level).

It is found in the endoplasmic reticulum membrane. The protein localises to the cytoplasm. Its subcellular location is the perinuclear region. It localises to the cytoplasmic vesicle. In terms of biological role, calcium-binding protein that interacts with newly synthesized monoglucosylated glycoproteins in the endoplasmic reticulum. It may act in assisting protein assembly and/or in the retention within the ER of unassembled protein subunits. It seems to play a major role in the quality control apparatus of the ER by the retention of incorrectly folded proteins. Required for embryogenesis and larval development under heat and ER stress conditions. May be important for germ cell development. Involved in neuronal necrotic cell death. The chain is Calnexin (cnx-1) from Caenorhabditis elegans.